The primary structure comprises 86 residues: Small ribosomal subunit protein bS20 (86 aa).

Residues 1 to 27 (MANSKSAKKRATQAERRRQHNASRRSM) show a composition bias toward basic residues. Residues 1–28 (MANSKSAKKRATQAERRRQHNASRRSMM) are disordered.

Belongs to the bacterial ribosomal protein bS20 family.

Functionally, binds directly to 16S ribosomal RNA. The protein is Small ribosomal subunit protein bS20 of Aliivibrio fischeri (strain MJ11) (Vibrio fischeri).